We begin with the raw amino-acid sequence, 72 residues long: Defensin 3 (72 aa).

Residues 1 to 25 (MEKKMAGFCIFFLVLFLAQEYGVEG) form the signal peptide. Cystine bridges form between Cys-28–Cys-72, Cys-39–Cys-60, and Cys-45–Cys-66.

Belongs to the DEFL family. May form dimers. Post-translationally, not glycosylated. Has 4 disulfide bonds.

In terms of biological role, probably has antifungal activity. The polypeptide is Defensin 3 (Arachis hypogaea (Peanut)).